The sequence spans 160 residues: MNLNFNPLETNLVNLAIVIGVLFWFLRGFLGGILERRRSAILQDLQDAEARLKTASEELTKAQSELAAAQQKAEQIRIDGQKRAAAIRAEGEKRTISVMAAIKQGAAADADAEASRIKDALRREAAMAAIDKVLTDLPGRLDDAAQSRLIDSTIRNLENA.

A helical membrane pass occupies residues 15–35; that stretch reads LAIVIGVLFWFLRGFLGGILE.

The protein belongs to the ATPase B chain family. As to quaternary structure, F-type ATPases have 2 components, F(1) - the catalytic core - and F(0) - the membrane proton channel. F(1) has five subunits: alpha(3), beta(3), gamma(1), delta(1), epsilon(1). F(0) has four main subunits: a(1), b(1), b'(1) and c(10-14). The alpha and beta chains form an alternating ring which encloses part of the gamma chain. F(1) is attached to F(0) by a central stalk formed by the gamma and epsilon chains, while a peripheral stalk is formed by the delta, b and b' chains.

It is found in the cellular thylakoid membrane. Functionally, f(1)F(0) ATP synthase produces ATP from ADP in the presence of a proton or sodium gradient. F-type ATPases consist of two structural domains, F(1) containing the extramembraneous catalytic core and F(0) containing the membrane proton channel, linked together by a central stalk and a peripheral stalk. During catalysis, ATP synthesis in the catalytic domain of F(1) is coupled via a rotary mechanism of the central stalk subunits to proton translocation. Its function is as follows. Component of the F(0) channel, it forms part of the peripheral stalk, linking F(1) to F(0). In Synechococcus sp. (strain CC9902), this protein is ATP synthase subunit b.